The following is a 50-amino-acid chain: Large ribosomal subunit protein bL33B (50 aa).

It belongs to the bacterial ribosomal protein bL33 family.

In Metamycoplasma arthritidis (strain 158L3-1) (Mycoplasma arthritidis), this protein is Large ribosomal subunit protein bL33B.